Here is a 397-residue protein sequence, read N- to C-terminus: uncharacterized protein (397 aa).

Transmembrane regions (helical) follow at residues 62–79 (VLLF…LIAI), 92–109 (WYGL…LVVT), 135–154 (VVFL…STLS), and 167–189 (AFLK…FPGI).

Its subcellular location is the cell membrane. This is an uncharacterized protein from Archaeoglobus fulgidus (strain ATCC 49558 / DSM 4304 / JCM 9628 / NBRC 100126 / VC-16).